The primary structure comprises 93 residues: Secretoglobin family 3A member 2 (93 aa).

A signal peptide spans 1 to 21 (MKLVTIFLLVTISLCSYSATA).

The protein belongs to the secretoglobin family. UGRP subfamily. As to quaternary structure, homodimer; disulfide-linked. Monomer. Interacts with APOA1. As to expression, highly expressed in lung and trachea. Detected throughout the airway epithelium in lung, with slightly higher expression in large airways. Found in lung submucosal gland acinus where it localizes to serous-like cells. Probably expressed in club cells of the bronchioles. Not detected in other tissues tested.

It is found in the secreted. Secreted cytokine-like protein. Binds to the scavenger receptor MARCO. Can also bind to pathogens including the Gram-positive bacterium L.monocytogenes, the Gram-negative bacterium P.aeruginosa, and yeast. Strongly inhibits phospholipase A2 (PLA2G1B) activity. Seems to have anti-inflammatory effects in respiratory epithelium. Also has anti-fibrotic activity in lung. May play a role in fetal lung development and maturation. Promotes branching morphogenesis during early stages of lung development. In the pituitary, may inhibit production of follicle-stimulating hormone (FSH) and luteinizing hormone (LH). The protein is Secretoglobin family 3A member 2 (SCGB3A2) of Homo sapiens (Human).